We begin with the raw amino-acid sequence, 183 residues long: UPF0200 protein MmarC7_0527 (183 aa).

Position 8–15 (8–15 (GMPGSGKS)) interacts with ATP.

This sequence belongs to the UPF0200 family.

The protein is UPF0200 protein MmarC7_0527 of Methanococcus maripaludis (strain C7 / ATCC BAA-1331).